A 315-amino-acid chain; its full sequence is MSHLVKWNGRGEVVIEQICLDSVRIKEKMKEIVDENILNEDLKVKLISFIKEKKQFSFAELAYYHYIAFDGKNDKAIELLASGIELLILSADIFDDIEDKDNLQASWMKLDPSIATNAATALYTLSLQVIGSVSNHPKLLSLTLQYSLQSLQGQHVDLNLTASSESEYIEMIKLKSGSLVTLPSILGVYLATGEYNETVEEYSRYLGIVEQIANDHYGLYYPNYNDFKTRHTLAFNYLKNKFNQSSIDLLNFYAQENHMINNLEDLKGKLRESGVIQYLNVIKNLAVENFKESFKKLRLDEQRKNKLLIQLLRGI.

The Mg(2+) site is built by aspartate 95 and aspartate 99.

It belongs to the FPP/GGPP synthase family. Mg(2+) serves as cofactor.

It localises to the cell membrane. The catalysed reaction is L-tryptophyl-[protein] + (2E,6E)-farnesyl diphosphate = (2S,3R)-3-farnesyl-2,3-dihydro-2,N(alpha)-cyclo-L-tryptophyl-[protein] + diphosphate. Its function is as follows. Part of a major quorum-sensing system that regulates the development of genetic competence. Involved in the maturation of the competence pheromone ComX. Acts by catalyzing the transfer of a farnesyl group on the ComX pheromone. In vitro, can also catalyze the farnesylation of single tryptophan and tryptophan derivatives. This is Tryptophan prenyltransferase ComQ from Bacillus subtilis subsp. natto (strain BEST195).